The primary structure comprises 246 residues: Hydroxyacylglutathione hydrolase (246 aa).

The Zn(2+) site is built by H58, H60, D62, H63, H117, D137, and H175.

Belongs to the metallo-beta-lactamase superfamily. Glyoxalase II family. As to quaternary structure, monomer. It depends on Zn(2+) as a cofactor.

The catalysed reaction is an S-(2-hydroxyacyl)glutathione + H2O = a 2-hydroxy carboxylate + glutathione + H(+). It participates in secondary metabolite metabolism; methylglyoxal degradation; (R)-lactate from methylglyoxal: step 2/2. In terms of biological role, thiolesterase that catalyzes the hydrolysis of S-D-lactoyl-glutathione to form glutathione and D-lactic acid. This is Hydroxyacylglutathione hydrolase from Prochlorococcus marinus (strain MIT 9312).